The primary structure comprises 269 residues: HTH-type transcriptional activator ArnR1 (269 aa).

Residues Met-1 to Tyr-217 are Cytoplasmic-facing. A DNA-binding region (H-T-H motif) is located at residues Thr-42 to Asp-65. The chain crosses the membrane as a helical span at residues Glu-218–Leu-238. Topologically, residues Lys-239–Gln-241 are extracellular. The chain crosses the membrane as a helical span at residues Leu-242 to Phe-262. Topologically, residues Ala-263–Ile-269 are cytoplasmic.

Its subcellular location is the cell membrane. Involved in regulation of archaellar gene expression. May activate flaB transcription upon nutrient starvation by acting on the flaB promoter. The protein is HTH-type transcriptional activator ArnR1 of Sulfolobus acidocaldarius (strain ATCC 33909 / DSM 639 / JCM 8929 / NBRC 15157 / NCIMB 11770).